Reading from the N-terminus, the 37-residue chain is Large ribosomal subunit protein bL36 (37 aa).

Belongs to the bacterial ribosomal protein bL36 family.

This is Large ribosomal subunit protein bL36 from Halorhodospira halophila (strain DSM 244 / SL1) (Ectothiorhodospira halophila (strain DSM 244 / SL1)).